The primary structure comprises 88 residues: Small ribosomal subunit protein uS15 (88 aa).

This sequence belongs to the universal ribosomal protein uS15 family. As to quaternary structure, part of the 30S ribosomal subunit. Forms a bridge to the 50S subunit in the 70S ribosome, contacting the 23S rRNA.

Its function is as follows. One of the primary rRNA binding proteins, it binds directly to 16S rRNA where it helps nucleate assembly of the platform of the 30S subunit by binding and bridging several RNA helices of the 16S rRNA. Forms an intersubunit bridge (bridge B4) with the 23S rRNA of the 50S subunit in the ribosome. The chain is Small ribosomal subunit protein uS15 from Mycoplasma capricolum subsp. capricolum (strain California kid / ATCC 27343 / NCTC 10154).